Here is a 460-residue protein sequence, read N- to C-terminus: Lipase member H-A (460 aa).

The signal sequence occupies residues 1 to 26 (MLLSFYFNGLLLVGCLLSWGRSDTEG). N-linked (GlcNAc...) asparagine glycans are attached at residues N67 and N75. S163 acts as the Nucleophile in catalysis. N177 carries N-linked (GlcNAc...) asparagine glycosylation. D187 serves as the catalytic Charge relay system. A disulfide bridge connects residues C242 and C255. H257 functions as the Charge relay system in the catalytic mechanism. 2 disulfides stabilise this stretch: C279–C290 and C293–C301. An N-linked (GlcNAc...) asparagine glycan is attached at N289. N-linked (GlcNAc...) asparagine glycosylation is present at N366. C436 and C455 are disulfide-bonded.

It belongs to the AB hydrolase superfamily. Lipase family.

The protein localises to the secreted. The protein resides in the cell membrane. The enzyme catalyses 1-hexadecanoyl-2-(9Z-octadecenoyl)-sn-glycero-3-phosphate + H2O = 2-(9Z-octadecenoyl)-sn-glycero-3-phosphate + hexadecanoate + H(+). Its function is as follows. Hydrolyzes specifically phosphatidic acid (PA) to produce 2-acyl lysophosphatidic acid (LPA; a potent bioactive lipid mediator) and fatty acid. Does not hydrolyze other phospholipids, like phosphatidylserine (PS), phosphatidylcholine (PC) and phosphatidylethanolamine (PE) or triacylglycerol (TG). The polypeptide is Lipase member H-A (liph-a) (Xenopus laevis (African clawed frog)).